We begin with the raw amino-acid sequence, 57 residues long: Large ribosomal subunit protein bL32 (57 aa).

It belongs to the bacterial ribosomal protein bL32 family.

The protein is Large ribosomal subunit protein bL32 of Staphylococcus epidermidis (strain ATCC 35984 / DSM 28319 / BCRC 17069 / CCUG 31568 / BM 3577 / RP62A).